The following is a 444-amino-acid chain: Acyl-CoA 6-desaturase (444 aa).

The Cytoplasmic portion of the chain corresponds to Met-1–His-130. Residues Met-18 to Ala-95 form the Cytochrome b5 heme-binding domain. A helical membrane pass occupies residues Leu-131–Leu-151. The Lumenal segment spans residues Ser-152–Gly-157. A helical membrane pass occupies residues Trp-158–Leu-178. At Gln-179–Glu-264 the chain is on the cytoplasmic side. The short motif at His-180–His-184 is the Histidine box-1 element. Residues His-217 to His-221 carry the Histidine box-2 motif. Residues Tyr-265 to Met-285 traverse the membrane as a helical segment. Residues Thr-286–Arg-305 lie on the Lumenal side of the membrane. Residues Phe-306–Ile-326 form a helical membrane-spanning segment. Residues Arg-327 to Lys-444 are Cytoplasmic-facing. The short motif at Gln-382–His-386 is the Histidine box-3 element.

Belongs to the fatty acid desaturase type 1 family. Expressed in the liver and brain (at protein level). Highest activity is found in the liver and adrenals followed by the testes and other organs, absent in adipose tissue.

The protein resides in the endoplasmic reticulum membrane. It is found in the microsome membrane. It catalyses the reaction (9Z,12Z)-octadecadienoyl-CoA + 2 Fe(II)-[cytochrome b5] + O2 + 2 H(+) = (6Z,9Z,12Z)-octadecatrienoyl-CoA + 2 Fe(III)-[cytochrome b5] + 2 H2O. The enzyme catalyses (9Z,12Z,15Z)-octadecatrienoyl-CoA + 2 Fe(II)-[cytochrome b5] + O2 + 2 H(+) = (6Z,9Z,12Z,15Z)-octadecatetraenoyl-CoA + 2 Fe(III)-[cytochrome b5] + 2 H2O. The catalysed reaction is (9Z,12Z,15Z,18Z,21Z)-tetracosapentaenoyl-CoA + 2 Fe(II)-[cytochrome b5] + O2 + 2 H(+) = (6Z,9Z,12Z,15Z,18Z,21Z)-tetracosahexaenoyl-CoA + 2 Fe(III)-[cytochrome b5] + 2 H2O. It carries out the reaction (11E)-octadecenoyl-CoA + 2 Fe(II)-[cytochrome b5] + O2 + 2 H(+) = (6Z,11E)-octadecadienoyl-CoA + 2 Fe(III)-[cytochrome b5] + 2 H2O. It catalyses the reaction (11Z,14Z)-eicosadienoyl-CoA + 2 Fe(II)-[cytochrome b5] + O2 + 2 H(+) = (8Z,11Z,14Z)-eicosatrienoyl-CoA + 2 Fe(III)-[cytochrome b5] + 2 H2O. The enzyme catalyses (11Z,14Z,17Z)-eicosatrienoyl-CoA + 2 Fe(II)-[cytochrome b5] + O2 + 2 H(+) = (8Z,11Z,14Z,17Z)-eicosatetraenoyl-CoA + 2 Fe(III)-[cytochrome b5] + 2 H2O. Its pathway is lipid metabolism; polyunsaturated fatty acid biosynthesis. In terms of biological role, involved in the biosynthesis of highly unsaturated fatty acids (HUFA) from the essential polyunsaturated fatty acids (PUFA) linoleic acid (LA) (18:2n-6) and alpha-linolenic acid (ALA) (18:3n-3) precursors, acting as a fatty acyl-coenzyme A (CoA) desaturase that introduces a cis double bond at carbon 6 of the fatty acyl chain. Catalyzes the first and rate limiting step in this pathway which is the desaturation of LA (18:2n-6) and ALA (18:3n-3) into gamma-linoleate (GLA) (18:3n-6) and stearidonate (18:4n-3), respectively. Subsequently, in the biosynthetic pathway of HUFA n-3 series, it desaturates tetracosapentaenoate (24:5n-3) to tetracosahexaenoate (24:6n-3), which is then converted to docosahexaenoate (DHA)(22:6n-3), an important lipid for nervous system function. It can also desaturate (11E)-octadecenoate (trans-vaccenoate) at carbon 6 generating (6Z,11E)-octadecadienoate. In addition to Delta-6 activity, this enzyme exhibits Delta-8 activity with slight biases toward n-3 fatty acyl-CoA substrates. The chain is Acyl-CoA 6-desaturase (Fads2) from Rattus norvegicus (Rat).